The following is an 89-amino-acid chain: Small ribosomal subunit protein uS15 (89 aa).

Residues M1–D21 show a composition bias toward basic and acidic residues. Positions M1–E26 are disordered.

It belongs to the universal ribosomal protein uS15 family. As to quaternary structure, part of the 30S ribosomal subunit. Forms a bridge to the 50S subunit in the 70S ribosome, contacting the 23S rRNA.

Its function is as follows. One of the primary rRNA binding proteins, it binds directly to 16S rRNA where it helps nucleate assembly of the platform of the 30S subunit by binding and bridging several RNA helices of the 16S rRNA. In terms of biological role, forms an intersubunit bridge (bridge B4) with the 23S rRNA of the 50S subunit in the ribosome. This Sphingopyxis alaskensis (strain DSM 13593 / LMG 18877 / RB2256) (Sphingomonas alaskensis) protein is Small ribosomal subunit protein uS15.